Here is a 383-residue protein sequence, read N- to C-terminus: MVVLSEIPGDPNEDNQNENPQEEVENLPILLQLPEELIASIVALIPRCHYPSLSLVSRAFRHLITSQELYVARSNLGFTEPVLYALIGFQAYTRPSWFFLRRSNFPLQLHRIRSLPPMLSGAAVVTIDYKMYVMGGCIGYNHPASSNVIVIDCRFHTWKYLPDMKRARCRAATGIIDGRIYVIGGCKKQDADWVEVFDVTTQSWETVPSECPNDANENGEFITYVVMQGRLFILDLECCFSYEPVQGLWESWDDGSELMRFWHSSSSCVVGDLLYALDLTCALEHPIVVYYPNELVWRPVMGVDTAHLPILTEYTSTLANFDGKLVILGGGDCSESSSEIWCVEIALETRQGDQIWGVVKSVSIVSRDLPMRHVIELCRTVMV.

Residues 1 to 21 (MVVLSEIPGDPNEDNQNENPQ) are disordered. Positions 11 to 21 (PNEDNQNENPQ) are enriched in acidic residues. Residues 27–73 (LPILLQLPEELIASIVALIPRCHYPSLSLVSRAFRHLITSQELYVAR) form the F-box domain. Kelch repeat units follow at residues 130-178 (KMYV…IIDG), 179-224 (RIYV…FITY), 226-272 (VMQG…VVGD), 274-317 (LYAL…YTST), and 324-370 (KLVI…RDLP).

The polypeptide is F-box/kelch-repeat protein At2g29830 (Arabidopsis thaliana (Mouse-ear cress)).